Consider the following 342-residue polypeptide: N-acetyl-gamma-glutamyl-phosphate reductase (342 aa).

Cys-149 is a catalytic residue.

The protein belongs to the NAGSA dehydrogenase family. Type 1 subfamily.

The protein resides in the cytoplasm. The catalysed reaction is N-acetyl-L-glutamate 5-semialdehyde + phosphate + NADP(+) = N-acetyl-L-glutamyl 5-phosphate + NADPH + H(+). It functions in the pathway amino-acid biosynthesis; L-arginine biosynthesis; N(2)-acetyl-L-ornithine from L-glutamate: step 3/4. Its function is as follows. Catalyzes the NADPH-dependent reduction of N-acetyl-5-glutamyl phosphate to yield N-acetyl-L-glutamate 5-semialdehyde. The chain is N-acetyl-gamma-glutamyl-phosphate reductase from Cereibacter sphaeroides (strain ATCC 17029 / ATH 2.4.9) (Rhodobacter sphaeroides).